The sequence spans 98 residues: NADH-ubiquinone oxidoreductase chain 4L (98 aa).

3 consecutive transmembrane segments (helical) span residues methionine 1–methionine 21, alanine 29–leucine 49, and isoleucine 61–valine 81.

This sequence belongs to the complex I subunit 4L family. As to quaternary structure, core subunit of respiratory chain NADH dehydrogenase (Complex I) which is composed of 45 different subunits.

It is found in the mitochondrion inner membrane. The enzyme catalyses a ubiquinone + NADH + 5 H(+)(in) = a ubiquinol + NAD(+) + 4 H(+)(out). Its function is as follows. Core subunit of the mitochondrial membrane respiratory chain NADH dehydrogenase (Complex I) which catalyzes electron transfer from NADH through the respiratory chain, using ubiquinone as an electron acceptor. Part of the enzyme membrane arm which is embedded in the lipid bilayer and involved in proton translocation. The chain is NADH-ubiquinone oxidoreductase chain 4L (MT-ND4L) from Balaenoptera omurai (Omura's baleen whale).